A 328-amino-acid polypeptide reads, in one-letter code: Biotin synthase (328 aa).

Residues 48–277 (FVGNEVHLCS…GKRITVCGGR (230 aa)) form the Radical SAM core domain. Positions 66, 70, and 73 each coordinate [4Fe-4S] cluster. Positions 142 and 202 each coordinate [2Fe-2S] cluster.

Belongs to the radical SAM superfamily. Biotin synthase family. As to quaternary structure, homodimer. [4Fe-4S] cluster is required as a cofactor. It depends on [2Fe-2S] cluster as a cofactor.

It catalyses the reaction (4R,5S)-dethiobiotin + (sulfur carrier)-SH + 2 reduced [2Fe-2S]-[ferredoxin] + 2 S-adenosyl-L-methionine = (sulfur carrier)-H + biotin + 2 5'-deoxyadenosine + 2 L-methionine + 2 oxidized [2Fe-2S]-[ferredoxin]. It participates in cofactor biosynthesis; biotin biosynthesis; biotin from 7,8-diaminononanoate: step 2/2. In terms of biological role, catalyzes the conversion of dethiobiotin (DTB) to biotin by the insertion of a sulfur atom into dethiobiotin via a radical-based mechanism. The sequence is that of Biotin synthase from Citrifermentans bemidjiense (strain ATCC BAA-1014 / DSM 16622 / JCM 12645 / Bem) (Geobacter bemidjiensis).